A 459-amino-acid chain; its full sequence is Siroheme synthase (459 aa).

Positions 1–204 (MDHLPIFCQL…ADEKAVNATT (204 aa)) are precorrin-2 dehydrogenase /sirohydrochlorin ferrochelatase. Residues 22 to 23 (DV) and 43 to 44 (LT) contribute to the NAD(+) site. S128 is modified (phosphoserine). The uroporphyrinogen-III C-methyltransferase stretch occupies residues 216-459 (GEVVLVGAGP…KLNWFSNYYD (244 aa)). P225 contributes to the S-adenosyl-L-methionine binding site. D248 serves as the catalytic Proton acceptor. K270 (proton donor) is an active-site residue. Residues 301-303 (GGD), I306, 331-332 (TA), M382, and G411 contribute to the S-adenosyl-L-methionine site.

This sequence in the N-terminal section; belongs to the precorrin-2 dehydrogenase / sirohydrochlorin ferrochelatase family. The protein in the C-terminal section; belongs to the precorrin methyltransferase family.

It carries out the reaction uroporphyrinogen III + 2 S-adenosyl-L-methionine = precorrin-2 + 2 S-adenosyl-L-homocysteine + H(+). The catalysed reaction is precorrin-2 + NAD(+) = sirohydrochlorin + NADH + 2 H(+). The enzyme catalyses siroheme + 2 H(+) = sirohydrochlorin + Fe(2+). It functions in the pathway cofactor biosynthesis; adenosylcobalamin biosynthesis; precorrin-2 from uroporphyrinogen III: step 1/1. Its pathway is cofactor biosynthesis; adenosylcobalamin biosynthesis; sirohydrochlorin from precorrin-2: step 1/1. It participates in porphyrin-containing compound metabolism; siroheme biosynthesis; precorrin-2 from uroporphyrinogen III: step 1/1. The protein operates within porphyrin-containing compound metabolism; siroheme biosynthesis; siroheme from sirohydrochlorin: step 1/1. It functions in the pathway porphyrin-containing compound metabolism; siroheme biosynthesis; sirohydrochlorin from precorrin-2: step 1/1. In terms of biological role, multifunctional enzyme that catalyzes the SAM-dependent methylations of uroporphyrinogen III at position C-2 and C-7 to form precorrin-2 via precorrin-1. Then it catalyzes the NAD-dependent ring dehydrogenation of precorrin-2 to yield sirohydrochlorin. Finally, it catalyzes the ferrochelation of sirohydrochlorin to yield siroheme. The polypeptide is Siroheme synthase (Salmonella agona (strain SL483)).